The chain runs to 117 residues: Large ribosomal subunit protein bL19 (117 aa).

Belongs to the bacterial ribosomal protein bL19 family.

Functionally, this protein is located at the 30S-50S ribosomal subunit interface and may play a role in the structure and function of the aminoacyl-tRNA binding site. The polypeptide is Large ribosomal subunit protein bL19 (Shewanella denitrificans (strain OS217 / ATCC BAA-1090 / DSM 15013)).